A 177-amino-acid polypeptide reads, in one-letter code: ATP synthase subunit delta (177 aa).

The protein belongs to the ATPase delta chain family. F-type ATPases have 2 components, F(1) - the catalytic core - and F(0) - the membrane proton channel. F(1) has five subunits: alpha(3), beta(3), gamma(1), delta(1), epsilon(1). F(0) has three main subunits: a(1), b(2) and c(10-14). The alpha and beta chains form an alternating ring which encloses part of the gamma chain. F(1) is attached to F(0) by a central stalk formed by the gamma and epsilon chains, while a peripheral stalk is formed by the delta and b chains.

The protein localises to the cell inner membrane. Its function is as follows. F(1)F(0) ATP synthase produces ATP from ADP in the presence of a proton or sodium gradient. F-type ATPases consist of two structural domains, F(1) containing the extramembraneous catalytic core and F(0) containing the membrane proton channel, linked together by a central stalk and a peripheral stalk. During catalysis, ATP synthesis in the catalytic domain of F(1) is coupled via a rotary mechanism of the central stalk subunits to proton translocation. This protein is part of the stalk that links CF(0) to CF(1). It either transmits conformational changes from CF(0) to CF(1) or is implicated in proton conduction. This Edwardsiella ictaluri (strain 93-146) protein is ATP synthase subunit delta.